The sequence spans 210 residues: N-(5'-phosphoribosyl)anthranilate isomerase (210 aa).

Belongs to the TrpF family.

The catalysed reaction is N-(5-phospho-beta-D-ribosyl)anthranilate = 1-(2-carboxyphenylamino)-1-deoxy-D-ribulose 5-phosphate. Its pathway is amino-acid biosynthesis; L-tryptophan biosynthesis; L-tryptophan from chorismate: step 3/5. The sequence is that of N-(5'-phosphoribosyl)anthranilate isomerase from Staphylococcus aureus (strain bovine RF122 / ET3-1).